A 59-amino-acid polypeptide reads, in one-letter code: MAVQQNKKSPSKRGMHRSHDFLTNPPLAVEPTSGEIHLRHHVSPNGYYRGRKVLPAKGE.

The interval 1 to 59 is disordered; it reads MAVQQNKKSPSKRGMHRSHDFLTNPPLAVEPTSGEIHLRHHVSPNGYYRGRKVLPAKGE. Over residues 49–59 the composition is skewed to basic residues; that stretch reads RGRKVLPAKGE.

It belongs to the bacterial ribosomal protein bL32 family.

This is Large ribosomal subunit protein bL32 from Methylobacillus flagellatus (strain ATCC 51484 / DSM 6875 / VKM B-1610 / KT).